The primary structure comprises 654 residues: MTHITESEMKQKYLDLLSQKFDSAEKLATEIINLESILELPKGTEHFVSDLHGEYESFQHVLRNGSGNVRAKINDIFKDKLSQQEINDLAALVYYPEEKLKLVKNNFDSIGTLNIWYITTIQRLIDLITYCSSKYTRSKLRKALPEQYVYIIEELLYKSNEFHNKKPYYETLVNQIIELEQSDDLIIGLSYTVQRLVVDHLHVVGDIYDRGPKPDKIMDTLINYHSVDIQWGNHDVLWIGAYAGSKVCLANLLRICARYDNLDIIEDAYGINLRPLLTLAEKYYDAENPAFKPKKRPDKDVSLTKREESQITKIHQAIAMIQFKLEMPIIKRRPSFEMEERLVLEKIDYDNNEITIYNKTYPLKDTCFQTVNPNNPAELLAEEKEVMDKLLLSFQQSEKLRRHMSFLMRKGKLYLPYNGNLLIHGCIPVDENGEMESFEIEGERLSGRELLDVFEYHVRRAFDHKESTEDISTDLVWYLWTGKYSSLFGKRAMTTFERYFIEDKASHKEEKNPYYYLREDVDMIRKMLKDFGLNPDEGRIINGHTPVKEIDGEDPIKANGKMLVIDGGFSKAYQSTTGIAGYTLLYNSFGMQLVAHKEFNRKEKVLSMGADELSVKRVVDEELQRKKIRDTNIGKQLQDQIDILKILMHDRYLT.

This sequence belongs to the FBPase class 3 family. Mn(2+) serves as cofactor.

The enzyme catalyses beta-D-fructose 1,6-bisphosphate + H2O = beta-D-fructose 6-phosphate + phosphate. Its pathway is carbohydrate biosynthesis; gluconeogenesis. This chain is Fructose-1,6-bisphosphatase class 3, found in Staphylococcus epidermidis (strain ATCC 35984 / DSM 28319 / BCRC 17069 / CCUG 31568 / BM 3577 / RP62A).